Reading from the N-terminus, the 37-residue chain is Small ribosomal subunit protein eS32 (37 aa).

Belongs to the eukaryotic ribosomal protein eS32 family. Part of the small ribosomal subunit.

This Pyrococcus furiosus (strain ATCC 43587 / DSM 3638 / JCM 8422 / Vc1) protein is Small ribosomal subunit protein eS32.